A 640-amino-acid polypeptide reads, in one-letter code: Pro-neuregulin-1, membrane-bound isoform (640 aa).

Positions 1-19 are excised as a propeptide; that stretch reads MSERKEGRGKGKGKKKERG. Residues 1-53 form a disordered region; sequence MSERKEGRGKGKGKKKERGSGKKPESAAGSQSPALPPRLKEMKSQESAAGSKL. Over 20–242 the chain is Extracellular; that stretch reads SGKKPESAAG…EKAEELYQKR (223 aa). The Ig-like C2-type domain maps to 37-128; it reads PRLKEMKSQE…GNDSASANIT (92 aa). Cysteines 57 and 112 form a disulfide. N-linked (GlcNAc...) asparagine glycans are attached at residues N120, N126, and N164. Residues 178–222 form the EGF-like domain; sequence HLVKCAEKEKTFCVNGGECFMVKDLSNPSRYLCKCQPGFTGARCT. Cystine bridges form between C182–C196, C190–C210, and C212–C221. Residues 243-265 traverse the membrane as a helical segment; the sequence is VLTITGICIALLVVGIMCVVAYC. Topologically, residues 266–640 are cytoplasmic; the sequence is KTKKQRKKLH…VIANQDPIAV (375 aa). A compositionally biased stretch (low complexity) spans 334–350; it reads TSHYTSTAHHSTTVTQT. 4 disordered regions span residues 334–360, 375–399, 433–461, and 524–588; these read TSHY…NGHT, SVEN…GGPR, RMSP…SMTV, and EYET…DTPF. The span at 351–360 shows a compositional bias: polar residues; sequence PSHSWSNGHT. Gly residues predominate over residues 387-397; the sequence is GPRGRLNGTGG. Residues 542–552 are compositionally biased toward basic residues; sequence ANSRRAKRTKP. Residues 563 to 574 show a composition bias toward low complexity; sequence DSNTSSQSSNSE.

The protein belongs to the neuregulin family. The cytoplasmic domain interacts with the LIM domain region of LIMK1. Forms a ternary complex with ERBB3 and ITGAV:ITGB3 or ITGA6:ITGB4. Interacts with NRDC and BACE1. Proteolytic cleavage close to the plasma membrane on the external face leads to the release of the soluble growth factor form. In terms of processing, N- and O-glycosylated. Extensive glycosylation precedes the proteolytic cleavage. As to expression, type I isoforms are the predominant forms expressed in the endocardium. Isoform alpha is expressed in breast, ovary, testis, prostate, heart, skeletal muscle, lung, placenta liver, kidney, salivary gland, small intestine and brain, but not in uterus, stomach, pancreas, and spleen. Isoform 3 is the predominant form in mesenchymal cells and in non-neuronal organs, whereas isoform 6 is the major neuronal form. Isoform 8 is expressed in spinal cord and brain. Isoform 9 is the major form in skeletal muscle cells; in the nervous system it is expressed in spinal cord and brain. Also detected in adult heart, placenta, lung, liver, kidney, and pancreas. Isoform 10 is expressed in nervous system: spinal cord motor neurons, dorsal root ganglion neurons, and brain. Predominant isoform expressed in sensory and motor neurons. Not detected in adult heart, placenta, lung, liver, skeletal muscle, kidney, and pancreas. Not expressed in fetal lung, liver and kidney. Type IV isoforms are brain-specific.

The protein localises to the cell membrane. The protein resides in the secreted. It localises to the nucleus. It is found in the membrane. Direct ligand for ERBB3 and ERBB4 tyrosine kinase receptors. Concomitantly recruits ERBB1 and ERBB2 coreceptors, resulting in ligand-stimulated tyrosine phosphorylation and activation of the ERBB receptors. The multiple isoforms perform diverse functions such as inducing growth and differentiation of epithelial, glial, neuronal, and skeletal muscle cells; inducing expression of acetylcholine receptor in synaptic vesicles during the formation of the neuromuscular junction; stimulating lobuloalveolar budding and milk production in the mammary gland and inducing differentiation of mammary tumor cells; stimulating Schwann cell proliferation; implication in the development of the myocardium such as trabeculation of the developing heart. Isoform 10 may play a role in motor and sensory neuron development. Binds to ERBB4. Binds to ERBB3. Acts as a ligand for integrins and binds (via EGF domain) to integrins ITGAV:ITGB3 or ITGA6:ITGB4. Its binding to integrins and subsequent ternary complex formation with integrins and ERRB3 are essential for NRG1-ERBB signaling. Induces the phosphorylation and activation of MAPK3/ERK1, MAPK1/ERK2 and AKT1. Ligand-dependent ERBB4 endocytosis is essential for the NRG1-mediated activation of these kinases in neurons. This Homo sapiens (Human) protein is Pro-neuregulin-1, membrane-bound isoform (NRG1).